The sequence spans 522 residues: AAA ATPase forming ring-shaped complexes (522 aa).

A disordered region spans residues Met-1–Gln-26. A coiled-coil region spans residues Ala-20–Ala-57. Gly-248–Leu-253 is a binding site for ATP.

The protein belongs to the AAA ATPase family. As to quaternary structure, homohexamer. Assembles into a hexameric ring structure.

In Bifidobacterium animalis subsp. lactis (strain AD011), this protein is AAA ATPase forming ring-shaped complexes.